The primary structure comprises 527 residues: Tyrosine-protein kinase TXK (527 aa).

The segment at 35-79 (DEELPEKYTQRRRPWLSQLSNKKQSNTGRVQPSKRKPLPPLPPSE) is disordered. The span at 51 to 64 (SQLSNKKQSNTGRV) shows a compositional bias: polar residues. Positions 68 to 73 (KRKPLP) match the Nuclear localization signal motif. One can recognise an SH3 domain in the interval 82-142 (EEKIQVKALY…PSNYVTENKI (61 aa)). Tyr-91 carries the phosphotyrosine; by autocatalysis modification. The SH2 domain maps to 150 to 246 (WYHRNITRNQ…GLMTRLRYPV (97 aa)). The Protein kinase domain occupies 271-527 (LAFIKEIGSG…RAVTEIAETW (257 aa)). Residues 277 to 285 (IGSGQFGVV) and Lys-299 contribute to the ATP site. Asp-390 acts as the Proton acceptor in catalysis. Tyr-420 carries the post-translational modification Phosphotyrosine; by FYN and autocatalysis.

It belongs to the protein kinase superfamily. Tyr protein kinase family. TEC subfamily. In terms of assembly, interacts with PARP1 and EEF1A1. Interacts with SH2D2A. Interacts with FYN. Phosphorylated at Tyr-420 by FYN. Autophosphorylation at Tyr-91 is critical for the activation of TXK, leading to the up-regulation of IFN-gamma gene transcription. Post-translationally, the cysteine string at the N-terminus is palmitoylated and required for the proper subcellular location. In terms of tissue distribution, expressed in T-cells and some myeloid cell lines. Expressed in Th1/Th0 cells with IFN-gamma-producing potential.

It is found in the cytoplasm. The protein localises to the nucleus. It localises to the cell membrane. The enzyme catalyses L-tyrosyl-[protein] + ATP = O-phospho-L-tyrosyl-[protein] + ADP + H(+). Activated by phosphorylation by FYN. Functionally, non-receptor tyrosine kinase that plays a redundant role with ITK in regulation of the adaptive immune response. Regulates the development, function and differentiation of conventional T-cells and nonconventional NKT-cells. When antigen presenting cells (APC) activate T-cell receptor (TCR), a series of phosphorylation leads to the recruitment of TXK to the cell membrane, where it is phosphorylated at Tyr-420. Phosphorylation leads to TXK full activation. Also contributes to signaling from many receptors and participates in multiple downstream pathways, including regulation of the actin cytoskeleton. Like ITK, can phosphorylate PLCG1, leading to its localization in lipid rafts and activation, followed by subsequent cleavage of its substrates. In turn, the endoplasmic reticulum releases calcium in the cytoplasm and the nuclear activator of activated T-cells (NFAT) translocates into the nucleus to perform its transcriptional duty. Plays a role in the positive regulation of IFNG transcription in T-helper 1 cells as part of an IFNG promoter-binding complex with PARP1 and EEF1A1. Within the complex, phosphorylates both PARP1 and EEF1A1. Also phosphorylates key sites in LCP2 leading to the up-regulation of Th1 preferred cytokine IL-2. Phosphorylates 'Tyr-201' of CTLA4 which leads to the association of PI-3 kinase with the CTLA4 receptor. In Homo sapiens (Human), this protein is Tyrosine-protein kinase TXK (TXK).